Consider the following 657-residue polypeptide: MTQLAIGKPTPLGAHYDGQGVNFTLFSAHAERVELCVFDANGQEHRYDLPGHSGDIWHGYLPDARPGLRYGYRVHGPWQPAEGHRFNPAKLLIDPCARQIDGEFKDNPLLHAGHNEPDYRDNAAIVPKCVVVVDHYDWEDDAPPRTPWGSTIIYEAHVKGLTYLHPEIPVEIRGTYKALGHPVMINYLKQLGITALELLPVAQFASEPRLQRMGLSNYWGYNPVAMFALHPAYACSPETALDEFRDAIKALHKAGIEVILDIVLNHSAELDLDGPLFSLRGIDNRSYYWIREDGDYHNWTGCGNTLNLSHPAVVDYASACLRYWVETCHVDGFRFDLAAVMGRTPEFRQDAPLFTAIQNCPVLSQVKLIAEPWDIAPGGYQVGNFPPLFAEWNDHFRDAARRFWLHYDLPLGVFAGRFAASSDVFKRNGRLPSAAINLVTAHDGFTLRDCVCFNHKHNEANGEENRDGTNNNYSNNHGKEGLGGTLDLVERRRDSIHALLTTLLLSQGTPMLLAGDEHGHSQHGNNNAYCQDNQLTWLDWSQASSGLTAFTAALIHLRKRIPALMENRWWEEGDGNVRWLNRYAQPLSTDEWQNGPKQLQILLSDRFLIAINATLEVTEIVLPAGEWHAIPPFAGEDNPVITAVWQGPAHGLCVFQR.

The active-site Nucleophile is D336. The active-site Proton donor is E371. The disordered stretch occupies residues 460-479 (ANGEENRDGTNNNYSNNHGK).

The protein belongs to the glycosyl hydrolase 13 family.

The catalysed reaction is Hydrolysis of (1-&gt;6)-alpha-D-glucosidic linkages to branches with degrees of polymerization of three or four glucose residues in limit dextrin.. The protein operates within glycan degradation; glycogen degradation. Removes maltotriose and maltotetraose chains that are attached by 1,6-alpha-linkage to the limit dextrin main chain, generating a debranched limit dextrin. In Escherichia coli O81 (strain ED1a), this protein is Glycogen debranching enzyme.